We begin with the raw amino-acid sequence, 173 residues long: uncharacterized protein (173 aa).

A propeptide spans Met-1–Gly-15 (leader sequence). Phe-16 carries the post-translational modification N-methylphenylalanine. A helical transmembrane segment spans residues Phe-16–Ile-37.

The protein localises to the membrane. This is an uncharacterized protein from Aquifex aeolicus (strain VF5).